We begin with the raw amino-acid sequence, 414 residues long: Translation initiation factor 2 subunit gamma (414 aa).

A tr-type G domain is found at 8–206 (QPEVNIGVVG…AIEKFIPTPP (199 aa)). The segment at 17–24 (GHVDHGKT) is G1. Residues D20, T24, G45, and T47 each contribute to the Mg(2+) site. A GTP-binding site is contributed by 20–25 (DHGKTT). The segment at 45–49 (GMTIK) is G2. Zn(2+) contacts are provided by C60, C63, C75, and C77. Residues 93 to 96 (DAPG) form a G3 region. GTP-binding positions include 149 to 152 (NKVD) and 184 to 186 (SAL). Residues 149 to 152 (NKVD) are G4. The segment at 184–186 (SAL) is G5.

The protein belongs to the TRAFAC class translation factor GTPase superfamily. Classic translation factor GTPase family. EIF2G subfamily. As to quaternary structure, heterotrimer composed of an alpha, a beta and a gamma chain. Mg(2+) serves as cofactor.

The enzyme catalyses GTP + H2O = GDP + phosphate + H(+). In terms of biological role, eIF-2 functions in the early steps of protein synthesis by forming a ternary complex with GTP and initiator tRNA. The chain is Translation initiation factor 2 subunit gamma from Aeropyrum pernix (strain ATCC 700893 / DSM 11879 / JCM 9820 / NBRC 100138 / K1).